A 200-amino-acid polypeptide reads, in one-letter code: Holliday junction branch migration complex subunit RuvA (200 aa).

Positions 1–63 (MIASVRGEVL…EDSMTLYGFP (63 aa)) are domain I. The interval 64–142 (DSESKELFGL…AVASTSGAVP (79 aa)) is domain II. Residues 142–146 (PLGAG) form a flexible linker region. Residues 147-200 (GGGSVRDQIVEALVGLGFPAKQAEQAADSVLAEAPESTTSTALRSALSLLGKTR) form a domain III region.

It belongs to the RuvA family. As to quaternary structure, homotetramer. Forms an RuvA(8)-RuvB(12)-Holliday junction (HJ) complex. HJ DNA is sandwiched between 2 RuvA tetramers; dsDNA enters through RuvA and exits via RuvB. An RuvB hexamer assembles on each DNA strand where it exits the tetramer. Each RuvB hexamer is contacted by two RuvA subunits (via domain III) on 2 adjacent RuvB subunits; this complex drives branch migration. In the full resolvosome a probable DNA-RuvA(4)-RuvB(12)-RuvC(2) complex forms which resolves the HJ.

Its subcellular location is the cytoplasm. Functionally, the RuvA-RuvB-RuvC complex processes Holliday junction (HJ) DNA during genetic recombination and DNA repair, while the RuvA-RuvB complex plays an important role in the rescue of blocked DNA replication forks via replication fork reversal (RFR). RuvA specifically binds to HJ cruciform DNA, conferring on it an open structure. The RuvB hexamer acts as an ATP-dependent pump, pulling dsDNA into and through the RuvAB complex. HJ branch migration allows RuvC to scan DNA until it finds its consensus sequence, where it cleaves and resolves the cruciform DNA. This chain is Holliday junction branch migration complex subunit RuvA, found in Rhodococcus jostii (strain RHA1).